We begin with the raw amino-acid sequence, 356 residues long: Protein RecA (356 aa).

ATP is bound at residue 69–76; it reads GPESSGKT.

This sequence belongs to the RecA family.

The protein resides in the cytoplasm. Its function is as follows. Can catalyze the hydrolysis of ATP in the presence of single-stranded DNA, the ATP-dependent uptake of single-stranded DNA by duplex DNA, and the ATP-dependent hybridization of homologous single-stranded DNAs. It interacts with LexA causing its activation and leading to its autocatalytic cleavage. The chain is Protein RecA from Gloeothece citriformis (strain PCC 7424) (Cyanothece sp. (strain PCC 7424)).